We begin with the raw amino-acid sequence, 316 residues long: MSVATSDMAEAIPERGRAVLIAGPTASGKSALALALAEACGGVIINTDSMQVYGDLRVLTARPTPADEARVPHRLYGTVDAAVNFSAGAWVEAAAAALADARGRGLLPIFVGGSGLYFKALTRGLSAVPAIAPQVREDVRARLEQGGVEALHAALARRDPTSAARLNPNDRSRVARALEVVEATGRSLTDWHRDALPPLLPPEQVTALFLAPQRDELYARIDARFELMLQAGALDEVAALAARKLDPLLPAMKAHGVPALIRHLKGEISRDEAASIGCADTRHYAKRQFTWFRHQLPEFEWVAPDRAAERLERQTG.

23-30 serves as a coordination point for ATP; that stretch reads GPTASGKS. Residue 25–30 participates in substrate binding; that stretch reads TASGKS. Positions 48–51 are interaction with substrate tRNA; the sequence is DSMQ.

The protein belongs to the IPP transferase family. Monomer. Requires Mg(2+) as cofactor.

It catalyses the reaction adenosine(37) in tRNA + dimethylallyl diphosphate = N(6)-dimethylallyladenosine(37) in tRNA + diphosphate. Catalyzes the transfer of a dimethylallyl group onto the adenine at position 37 in tRNAs that read codons beginning with uridine, leading to the formation of N6-(dimethylallyl)adenosine (i(6)A). The sequence is that of tRNA dimethylallyltransferase from Rhodopseudomonas palustris (strain BisB18).